We begin with the raw amino-acid sequence, 732 residues long: Formin-homology and zinc finger domains protein 1 (732 aa).

Composition is skewed to low complexity over residues 1–12 (MMLASSAPTAPS), 19–45 (QPSA…SDAS), 121–137 (QQQQ…QSSS), and 240–251 (SSPKSPTSPTQP). An N-terminal signal peptide occupies residues 1 to 27 (MMLASSAPTAPSLLPPSSQPSAATTRA). Disordered regions lie at residues 1–45 (MMLA…SDAS), 121–141 (QQQQ…SDRK), and 232–267 (RGRP…RRNT). Polar residues predominate over residues 256–267 (SQASSLPSRRNT). Residues 355–732 (PISLSSSIIP…DDHHINVSSP (378 aa)) form the FH2 domain.

Belongs to the formin homology family. As to expression, transiently expressed in all mesoderm derived progenitor body wall muscle cells before they differentiate.

Acts redundantly with hlh-1 to promote body wall muscle cell and coelomocyte specification in postembryonic mesoderm progenitors, probably through suppression of sem-2. This chain is Formin-homology and zinc finger domains protein 1, found in Caenorhabditis elegans.